We begin with the raw amino-acid sequence, 173 residues long: Transcription factor E (173 aa).

The region spanning 9–92 is the HTH TFE/IIEalpha-type domain; sequence NNPATRAYIH…LWQLRIDLLY (84 aa).

Belongs to the TFE family. In terms of assembly, monomer. Interaction with RNA polymerase subunits RpoF and RpoE is necessary for Tfe stimulatory transcription activity. Able to interact with Tbp and RNA polymerase in the absence of DNA promoter. Interacts both with the preinitiation and elongation complexes.

Its function is as follows. Transcription factor that plays a role in the activation of archaeal genes transcribed by RNA polymerase. Facilitates transcription initiation by enhancing TATA-box recognition by TATA-box-binding protein (Tbp), and transcription factor B (Tfb) and RNA polymerase recruitment. Not absolutely required for transcription in vitro, but particularly important in cases where Tbp or Tfb function is not optimal. It dynamically alters the nucleic acid-binding properties of RNA polymerases by stabilizing the initiation complex and destabilizing elongation complexes. Seems to translocate with the RNA polymerase following initiation and acts by binding to the non template strand of the transcription bubble in elongation complexes. In Methanoregula boonei (strain DSM 21154 / JCM 14090 / 6A8), this protein is Transcription factor E.